Here is a 117-residue protein sequence, read N- to C-terminus: Immunoglobulin heavy variable 3-74 (117 aa).

The N-terminal stretch at 1–19 is a signal peptide; it reads MEFGLSWVFLVAILKGVQC. The interval 20–44 is framework-1; sequence EVQLVESGGGLVQPGGSLRLSCAAS. One can recognise an Ig-like domain in the interval 20–117; that stretch reads EVQLVESGGG…EDTAVYYCAR (98 aa). The cysteines at positions 41 and 115 are disulfide-linked. A complementarity-determining-1 region spans residues 45 to 52; sequence GFTFSSYW. A framework-2 region spans residues 53-69; the sequence is MHWVRQAPGKGLVWVSR. Residues 70 to 77 are complementarity-determining-2; it reads INSDGSST. The interval 78–115 is framework-3; it reads SYADSVKGRFTISRDNAKNTLYLQMNSLRAEDTAVYYC. A complementarity-determining-3 region spans residues 116 to 117; it reads AR.

Immunoglobulins are composed of two identical heavy chains and two identical light chains; disulfide-linked.

The protein localises to the secreted. It is found in the cell membrane. V region of the variable domain of immunoglobulin heavy chains that participates in the antigen recognition. Immunoglobulins, also known as antibodies, are membrane-bound or secreted glycoproteins produced by B lymphocytes. In the recognition phase of humoral immunity, the membrane-bound immunoglobulins serve as receptors which, upon binding of a specific antigen, trigger the clonal expansion and differentiation of B lymphocytes into immunoglobulins-secreting plasma cells. Secreted immunoglobulins mediate the effector phase of humoral immunity, which results in the elimination of bound antigens. The antigen binding site is formed by the variable domain of one heavy chain, together with that of its associated light chain. Thus, each immunoglobulin has two antigen binding sites with remarkable affinity for a particular antigen. The variable domains are assembled by a process called V-(D)-J rearrangement and can then be subjected to somatic hypermutations which, after exposure to antigen and selection, allow affinity maturation for a particular antigen. The protein is Immunoglobulin heavy variable 3-74 of Homo sapiens (Human).